The primary structure comprises 405 residues: Aspartokinase (405 aa).

2 ACT domains span residues 267–344 and 345–405; these read VSME…AKVS and IVGV…QLDQ.

It belongs to the aspartokinase family.

It catalyses the reaction L-aspartate + ATP = 4-phospho-L-aspartate + ADP. The protein operates within amino-acid biosynthesis; L-lysine biosynthesis via DAP pathway; (S)-tetrahydrodipicolinate from L-aspartate: step 1/4. It functions in the pathway amino-acid biosynthesis; L-methionine biosynthesis via de novo pathway; L-homoserine from L-aspartate: step 1/3. It participates in amino-acid biosynthesis; L-threonine biosynthesis; L-threonine from L-aspartate: step 1/5. The chain is Aspartokinase (lysC) from Helicobacter pylori (strain J99 / ATCC 700824) (Campylobacter pylori J99).